The following is a 207-amino-acid chain: Octanoyltransferase (207 aa).

The 177-residue stretch at 27 to 203 (ADTEDELWVV…HLETQFTPKA (177 aa)) folds into the BPL/LPL catalytic domain. Residues 66–73 (RGGQITYH), 133–135 (SLG), and 146–148 (GLA) each bind substrate. Cysteine 164 (acyl-thioester intermediate) is an active-site residue.

The protein belongs to the LipB family.

The protein localises to the cytoplasm. The enzyme catalyses octanoyl-[ACP] + L-lysyl-[protein] = N(6)-octanoyl-L-lysyl-[protein] + holo-[ACP] + H(+). It functions in the pathway protein modification; protein lipoylation via endogenous pathway; protein N(6)-(lipoyl)lysine from octanoyl-[acyl-carrier-protein]: step 1/2. Its function is as follows. Catalyzes the transfer of endogenously produced octanoic acid from octanoyl-acyl-carrier-protein onto the lipoyl domains of lipoate-dependent enzymes. Lipoyl-ACP can also act as a substrate although octanoyl-ACP is likely to be the physiological substrate. The chain is Octanoyltransferase from Neisseria meningitidis serogroup B (strain ATCC BAA-335 / MC58).